We begin with the raw amino-acid sequence, 96 residues long: Molybdopterin synthase sulfur carrier subunit (96 aa).

The residue at position 96 (Gly96) is a 1-thioglycine; alternate. Gly96 bears the Glycyl adenylate; alternate mark.

This sequence belongs to the MoaD family. MOCS2A subfamily. In terms of assembly, heterotetramer; composed of 2 small (MOCS2A) and 2 large (MOCS2B) subunits. Post-translationally, C-terminal thiocarboxylation occurs in 2 steps, it is first acyl-adenylated (-COAMP) via the hesA/moeB/thiF part of UBA4, then thiocarboxylated (-COSH) via the rhodanese domain of UBA4.

It is found in the cytoplasm. It participates in cofactor biosynthesis; molybdopterin biosynthesis. Functionally, acts as a sulfur carrier required for molybdopterin biosynthesis. Component of the molybdopterin synthase complex that catalyzes the conversion of precursor Z into molybdopterin by mediating the incorporation of 2 sulfur atoms into precursor Z to generate a dithiolene group. In the complex, serves as sulfur donor by being thiocarboxylated (-COSH) at its C-terminus by UBA4. After interaction with MOCS2B, the sulfur is then transferred to precursor Z to form molybdopterin. This chain is Molybdopterin synthase sulfur carrier subunit, found in Phaeosphaeria nodorum (strain SN15 / ATCC MYA-4574 / FGSC 10173) (Glume blotch fungus).